The chain runs to 193 residues: Glycerol-3-phosphate acyltransferase (193 aa).

The next 5 helical transmembrane spans lie at Ala2–Val22, Gln51–Ala71, Gly78–Phe98, Val112–Val132, and Ile154–Trp174.

It belongs to the PlsY family. Probably interacts with PlsX.

Its subcellular location is the cell inner membrane. It catalyses the reaction an acyl phosphate + sn-glycerol 3-phosphate = a 1-acyl-sn-glycero-3-phosphate + phosphate. Its pathway is lipid metabolism; phospholipid metabolism. Its function is as follows. Catalyzes the transfer of an acyl group from acyl-phosphate (acyl-PO(4)) to glycerol-3-phosphate (G3P) to form lysophosphatidic acid (LPA). This enzyme utilizes acyl-phosphate as fatty acyl donor, but not acyl-CoA or acyl-ACP. The polypeptide is Glycerol-3-phosphate acyltransferase (Coxiella burnetii (strain CbuG_Q212) (Coxiella burnetii (strain Q212))).